The chain runs to 352 residues: Phospho-N-acetylmuramoyl-pentapeptide-transferase (352 aa).

10 helical membrane passes run 16–36 (YITF…LLFM), 66–86 (TPTM…LLCA), 88–108 (LNNL…LIGL), 129–149 (MLYL…FGME), 160–180 (PLLS…VATS), 191–211 (GLAT…VYIA), 228–248 (SGEA…FLWF), 255–275 (LFMG…MAII), 280–300 (FLLF…ILQI), and 329–349 (KIIV…LLTL).

The protein belongs to the glycosyltransferase 4 family. MraY subfamily. The cofactor is Mg(2+).

It localises to the cell inner membrane. The catalysed reaction is UDP-N-acetyl-alpha-D-muramoyl-L-alanyl-gamma-D-glutamyl-meso-2,6-diaminopimeloyl-D-alanyl-D-alanine + di-trans,octa-cis-undecaprenyl phosphate = di-trans,octa-cis-undecaprenyl diphospho-N-acetyl-alpha-D-muramoyl-L-alanyl-D-glutamyl-meso-2,6-diaminopimeloyl-D-alanyl-D-alanine + UMP. Its pathway is cell wall biogenesis; peptidoglycan biosynthesis. Catalyzes the initial step of the lipid cycle reactions in the biosynthesis of the cell wall peptidoglycan: transfers peptidoglycan precursor phospho-MurNAc-pentapeptide from UDP-MurNAc-pentapeptide onto the lipid carrier undecaprenyl phosphate, yielding undecaprenyl-pyrophosphoryl-MurNAc-pentapeptide, known as lipid I. The sequence is that of Phospho-N-acetylmuramoyl-pentapeptide-transferase from Wolinella succinogenes (strain ATCC 29543 / DSM 1740 / CCUG 13145 / JCM 31913 / LMG 7466 / NCTC 11488 / FDC 602W) (Vibrio succinogenes).